The following is a 630-amino-acid chain: A-type voltage-gated potassium channel KCND2 (630 aa).

Over 1 to 184 the chain is Cytoplasmic; sequence MAAGVAAWLP…FENPHTSTMA (184 aa). An interaction with KCNIP1, KCNIP2, and other family members region spans residues 2-20; sequence AAGVAAWLPFARAAAIGWM. Phosphothreonine is present on Thr38. The interaction with KCNIP1 stretch occupies residues 71 to 90; sequence ERDFFYHPETQQYFFDRDPD. 4 residues coordinate Zn(2+): His105, Cys111, Cys132, and Cys133. A helical membrane pass occupies residues 185–206; it reads LVFYYVTGFFIAVSVIANVVET. The Extracellular segment spans residues 207 to 226; the sequence is VPCGSSPGHIKELPCGERYA. The chain crosses the membrane as a helical span at residues 227–249; it reads VAFFCLDTACVMIFTVEYLLRLA. At 250–256 the chain is on the cytoplasmic side; it reads AAPSRYR. Residues 257–281 traverse the membrane as a helical segment; sequence FVRSVMSIIDVVAILPYYIGLVMTD. The Extracellular portion of the chain corresponds to 282–287; it reads NEDVSG. The helical; Voltage-sensor transmembrane segment at 288-307 threads the bilayer; it reads AFVTLRVFRVFRIFKFSRHS. The Cytoplasmic portion of the chain corresponds to 308 to 321; it reads QGLRILGYTLKSCA. Positions 308-321 are S4-S5 linker; sequence QGLRILGYTLKSCA. The chain crosses the membrane as a helical span at residues 322-345; the sequence is SELGFLLFSLTMAIIIFATVMFYA. Over 346–357 the chain is Extracellular; sequence EKGSSASKFTSI. Residues 358 to 369 constitute an intramembrane region (helical); that stretch reads PAAFWYTIVTMT. Residues Thr370, Leu371, Gly372, and Tyr373 each contribute to the K(+) site. A Selectivity filter motif is present at residues 370-375; sequence TLGYGD. Residues 370 to 377 lie within the membrane without spanning it; it reads TLGYGDMV. The Extracellular segment spans residues 378–380; sequence PKT. A helical membrane pass occupies residues 381–403; it reads IAGKIFGSICSLSGVLVIALPVP. Residues 404–630 lie on the Cytoplasmic side of the membrane; sequence VIVSNFSRIY…GGNIVRVSAL (227 aa). Ser438 carries the post-translational modification Phosphoserine. A required for dendritic targeting region spans residues 474–489; it reads FETQHHHLLHCLEKTT. The segment at 474-630 is important for normal channel activation and inactivation, for interaction with KCNIP2, and probably other family members as well; sequence FETQHHHLLH…GGNIVRVSAL (157 aa). Residues Ser548, Ser552, Ser572, and Ser575 each carry the phosphoserine modification. A disordered region spans residues 600-630; it reads IPTPPVTTPEGDDRPESPEYSGGNIVRVSAL. Phosphothreonine is present on residues Thr602 and Thr607. At Ser616 the chain carries Phosphoserine. The short motif at 627–630 is the PDZ-binding element; sequence VSAL.

It belongs to the potassium channel family. D (Shal) (TC 1.A.1.2) subfamily. Kv4.2/KCND2 sub-subfamily. As to quaternary structure, homotetramer or heterotetramer with KCND1 or KCND3. Associates with the regulatory subunits KCNIP2, KCNIP3 and KCNIP4. Interacts with the regulatory subunit KCNIP1; this interaction mediates the capture of both the N- and C-terminus of KCND2, preventing N-type inactivation and stabilizing the S6 conformation, thereby accelerating closed state inactivation and recovery. In vivo, probably exists as heteromeric complex containing variable proportions of KCND1, KCND2, KCND3, KCNIP1, KCNIP2, KCNIP3, KCNIP4, DPP6 and DPP10. The tetrameric channel can associate with up to four regulatory subunits, such as KCNIP2 or KCNIP4. Interaction with four KCNIP4 chains does not reduce interaction with DPP10. Interacts with DLG4 and NCS1/FREQ. Interacts with DLG1. Probably part of a complex consisting of KCNIP1, KCNIP2 isoform 3 and KCND2. Interacts with FLNA, FLNC and DPP10. Interacts (via S1 and S2 helices) with DPP6; this interaction stabilizes the conformation of the S1-S2 helices and facilitates S4 conformational change, including S4 sliding up and down, thereby accelerating activation, inactivation, and recovery. Post-translationally, phosphorylation at Ser-438 in response to MAPK activation is increased in stimulated dendrites. Interaction with KCNIP2 and DPP6 propomtes phosphorylation by PKA at Ser-552. Phosphorylation at Ser-552 has no effect on interaction with KCNIP3, but is required for the regulation of channel activity by KCNIP3. Phosphorylation at Ser-552 leads to KCND2 internalization. Phosphorylated by MAPK in response to signaling via the metabotropic glutamate receptor GRM5. Phosphorylation at Ser-616 is required for the down-regulation of neuronal A-type currents in response to signaling via GRM5. Detected in ovary, in corpus luteum and in granulosa and theca cells in the follicle (at protein level). Highly expressed throughout the brain. Detected in amygdala, caudate nucleus, cerebellum, hippocampus, substantia nigra and thalamus. Expression is not detectable or very low in heart, kidney, liver, lung, pancreas and skeletal muscle. Not detectable in human heart atrium.

The protein localises to the cell membrane. It localises to the cell projection. It is found in the dendrite. The protein resides in the synapse. Its subcellular location is the perikaryon. The protein localises to the postsynaptic cell membrane. It localises to the dendritic spine. It is found in the cell junction. The catalysed reaction is K(+)(in) = K(+)(out). Functionally, voltage-gated potassium channel that mediates transmembrane potassium transport in excitable membranes, primarily in the brain. Mediates the major part of the dendritic A-type current I(SA) in brain neurons. This current is activated at membrane potentials that are below the threshold for action potentials. It regulates neuronal excitability, prolongs the latency before the first spike in a series of action potentials, regulates the frequency of repetitive action potential firing, shortens the duration of action potentials and regulates the back-propagation of action potentials from the neuronal cell body to the dendrites. Contributes to the regulation of the circadian rhythm of action potential firing in suprachiasmatic nucleus neurons, which regulates the circadian rhythm of locomotor activity. Functions downstream of the metabotropic glutamate receptor GRM5 and plays a role in neuronal excitability and in nociception mediated by activation of GRM5. Mediates the transient outward current I(to) in rodent heart left ventricle apex cells, but not in human heart, where this current is mediated by another family member. Forms tetrameric potassium-selective channels through which potassium ions pass in accordance with their electrochemical gradient. The channel alternates between opened and closed conformations in response to the voltage difference across the membrane. Can form functional homotetrameric channels and heterotetrameric channels that contain variable proportions of KCND2 and KCND3; channel properties depend on the type of pore-forming alpha subunits that are part of the channel. In vivo, membranes probably contain a mixture of heteromeric potassium channel complexes. Interaction with specific isoforms of the regulatory subunits KCNIP1, KCNIP2, KCNIP3 or KCNIP4 strongly increases expression at the cell surface and thereby increases channel activity; it modulates the kinetics of channel activation and inactivation, shifts the threshold for channel activation to more negative voltage values, shifts the threshold for inactivation to less negative voltages and accelerates recovery after inactivation. Likewise, interaction with DPP6 or DPP10 promotes expression at the cell membrane and regulates both channel characteristics and activity. Upon depolarization, the channel goes from a resting closed state (C state) to an activated but non-conducting state (C* state), from there, the channel may either inactivate (I state) or open (O state). This chain is A-type voltage-gated potassium channel KCND2, found in Homo sapiens (Human).